The sequence spans 309 residues: GATA transcription factor 25 (309 aa).

The disordered stretch occupies residues 1–35; it reads MFGRHSIIPNNQIGTASASAGEDHVSASATSGHIP. A compositionally biased stretch (polar residues) spans 8-18; that stretch reads IPNNQIGTASA. The 36-residue stretch at 77-112 folds into the Tify domain; that stretch reads PPEGANQLTISFRGQVYVFDAVGADKVDAVLSLLGG. Positions 146 to 188 constitute a CCT domain; the sequence is RAQSLDRFRKKRNARCFEKKVRYGVRQEVALRMARNKGQFTSS. Polar residues predominate over residues 187-202; that stretch reads SSKMTDGAYNSGTDQD. The interval 187 to 207 is disordered; the sequence is SSKMTDGAYNSGTDQDSAQDD. A GATA-type zinc finger spans residues 208 to 267; that stretch reads AHPEISCTHCGISSKCTPMMRRGPSGPRTLCNACGLFWANRGTLRDLSKKTEENQLALMK. Positions 290–309 are disordered; sequence EHTSMVSLANGDNSNLLGDH. Residues 293–309 are compositionally biased toward polar residues; that stretch reads SMVSLANGDNSNLLGDH.

Belongs to the type IV zinc-finger family. Class C subfamily. Predominantly expressed in shoot apices, inflorescences and roots.

Its subcellular location is the nucleus. Its function is as follows. Transcriptional activator that specifically binds 5'-GATA-3' or 5'-GAT-3' motifs within gene promoters. This chain is GATA transcription factor 25 (GATA25), found in Arabidopsis thaliana (Mouse-ear cress).